The chain runs to 162 residues: MRLVEIGRFGAPYALKGGLRFRGEPVVLHLERVYVEGHGWRAIEDLYRVGEELVVHLAGVTDRTLAEALVGLRVYAEVADLPPLEEGRYYYFALIGLPVYVEGRQVGEVVDILDAGAQDVLIIRGVGERLRDRAERLVPLQAPYVRVEEGSIHVDPIPGLFD.

Positions 86-160 constitute a PRC barrel domain; it reads EGRYYYFALI…SIHVDPIPGL (75 aa).

This sequence belongs to the RimM family. As to quaternary structure, binds ribosomal protein uS19.

It is found in the cytoplasm. In terms of biological role, an accessory protein needed during the final step in the assembly of 30S ribosomal subunit, possibly for assembly of the head region. Essential for efficient processing of 16S rRNA. May be needed both before and after RbfA during the maturation of 16S rRNA. It has affinity for free ribosomal 30S subunits but not for 70S ribosomes. This chain is Ribosome maturation factor RimM, found in Thermus thermophilus (strain ATCC 27634 / DSM 579 / HB8).